A 245-amino-acid polypeptide reads, in one-letter code: UDP-2,3-diacylglucosamine hydrolase (245 aa).

Residues aspartate 8, histidine 10, aspartate 41, asparagine 80, and histidine 115 each coordinate Mn(2+). Residue 80–81 coordinates substrate; the sequence is NR. 5 residues coordinate substrate: aspartate 123, serine 161, lysine 165, lysine 168, and histidine 196. The Mn(2+) site is built by histidine 196 and histidine 198.

It belongs to the LpxH family. Requires Mn(2+) as cofactor.

It localises to the cell inner membrane. The catalysed reaction is UDP-2-N,3-O-bis[(3R)-3-hydroxytetradecanoyl]-alpha-D-glucosamine + H2O = 2-N,3-O-bis[(3R)-3-hydroxytetradecanoyl]-alpha-D-glucosaminyl 1-phosphate + UMP + 2 H(+). The protein operates within glycolipid biosynthesis; lipid IV(A) biosynthesis; lipid IV(A) from (3R)-3-hydroxytetradecanoyl-[acyl-carrier-protein] and UDP-N-acetyl-alpha-D-glucosamine: step 4/6. Hydrolyzes the pyrophosphate bond of UDP-2,3-diacylglucosamine to yield 2,3-diacylglucosamine 1-phosphate (lipid X) and UMP by catalyzing the attack of water at the alpha-P atom. Involved in the biosynthesis of lipid A, a phosphorylated glycolipid that anchors the lipopolysaccharide to the outer membrane of the cell. In Psychromonas ingrahamii (strain DSM 17664 / CCUG 51855 / 37), this protein is UDP-2,3-diacylglucosamine hydrolase.